Here is a 376-residue protein sequence, read N- to C-terminus: MDKISAPFFSGTSPAAASVAGVDEDDRLCFQAQELMFAYNISMVLRAAIQLGLLDALSAAGGKALTPNELVENVETSSNKAEAAAAVDRILRYLSCFNVVTCSSEAAGPDGTLVRRYTTGPLCRWLTKDRGDGTLSPFAVFVVDPDHLFPWHHIAEAVTAGGPSAFERTQKWPYYEYMGKNQRLGTLFDNAMAQHSVILVTKMLERFKGFDGVQRLVDVGGGTGSTLGMITSKYKHMTGINYDLPHVIAQGLPLPGVEHVAGDMYESIPTGDAVLLQWITLMLNDDEFVKILSNCHNALPKDGKVIVVDGILPENPDSSLTARDAFTLDIIMFVLFKGAKQRTEKEFARLAKQAGFTGGIKKTYIFFNFYALEFTK.

Residues Gly-220, Asp-243, Asp-263, and Met-264 each coordinate S-adenosyl-L-homocysteine.

Belongs to the class I-like SAM-binding methyltransferase superfamily. Cation-independent O-methyltransferase family. In terms of tissue distribution, more present in the fifth leaf than in the second leaf (at protein level).

The catalysed reaction is 3-(aminomethyl)indole + 2 S-adenosyl-L-methionine = gramine + 2 S-adenosyl-L-homocysteine + 2 H(+). Its pathway is alkaloid biosynthesis. With respect to regulation, repressed by sodium carbonate, sodium bicarbonate and K-phosphate. Its function is as follows. Methylates 3-aminomethylindole (AMI) and N-methyl-3-aminomethylindole (MAMI), two substrates involved in gramine biosynthesis, a toxic indole alkaloid. Can use S-adenosyl-L-methionine (AdoMet) as a methyl donor. Unable to mediate caffeic acid O-methylation. The protein is 3-aminomethylindole N-methyltransferase of Hordeum vulgare subsp. vulgare (Domesticated barley).